The primary structure comprises 870 residues: DNA mismatch repair protein MutS (870 aa).

608–615 (GPNMAGKS) contributes to the ATP binding site.

Belongs to the DNA mismatch repair MutS family.

This protein is involved in the repair of mismatches in DNA. It is possible that it carries out the mismatch recognition step. This protein has a weak ATPase activity. The polypeptide is DNA mismatch repair protein MutS (Persephonella marina (strain DSM 14350 / EX-H1)).